We begin with the raw amino-acid sequence, 223 residues long: Movement and silencing protein TGBp1 (223 aa).

The 136-residue stretch at 1–136 (METVLSLLNE…QILRDLGYNI (136 aa)) folds into the (+)RNA virus helicase ATP-binding domain. The (+)RNA virus helicase C-terminal domain maps to 137–223 (ASSKEDIVEK…HRSKLVLVSN (87 aa)).

The protein belongs to the Tymovirales TGBp1 protein family. Homodimer and homooligomer. Interacts with capsid protein. Interacts with host AGO1; this interaction targets the host protein for degradation, thereby suppressing the antiviral RNA silencing.

The protein resides in the host cytoplasm. Transports viral genome to neighboring plant cells directly through plasmosdesmata, without any budding. The movement protein allows efficient cell to cell propagation, by bypassing the host cell wall barrier. Increases plasmodesma size exclusion limit. Acts as a suppressor of RNA-mediated gene silencing, also known as post-transcriptional gene silencing (PTGS), a mechanism of plant viral defense that limits the accumulation of viral RNAs. The polypeptide is Movement and silencing protein TGBp1 (Crataegus (hawthorn)).